Reading from the N-terminus, the 396-residue chain is Ubiquitin-like modifier-activating enzyme 5 (396 aa).

Residues Gly-76, Asp-97, Lys-120, Asn-143, and Asn-177 each contribute to the ATP site. 2 residues coordinate Zn(2+): Cys-219 and Cys-222. Cys-243 acts as the Glycyl thioester intermediate in catalysis. Zn(2+)-binding residues include Cys-296 and Cys-301.

This sequence belongs to the ubiquitin-activating E1 family. UBA5 subfamily.

Its function is as follows. E1-like enzyme which activates UFM1. The sequence is that of Ubiquitin-like modifier-activating enzyme 5 from Drosophila ananassae (Fruit fly).